Consider the following 201-residue polypeptide: uncharacterized protein (201 aa).

A disordered region spans residues 53 to 74 (PKKNTAHKNSTTSTVASSGNTT). A compositionally biased stretch (polar residues) spans 59 to 74 (HKNSTTSTVASSGNTT). The bHLH domain occupies 88–136 (AKRLSHKEVERRRREAISEGIKELANIVPGCEKNKGSILQRTAQYIRSL).

It is found in the nucleus. This is an uncharacterized protein from Schizosaccharomyces pombe (strain 972 / ATCC 24843) (Fission yeast).